The following is a 478-amino-acid chain: Catalase easC (478 aa).

His-54 is a catalytic residue. Tyr-343 is a heme binding site. The segment at 459–478 (VAEKARPDSPSRAQPGQLRL) is disordered.

The protein belongs to the catalase family. The cofactor is heme.

It participates in alkaloid biosynthesis; ergot alkaloid biosynthesis. In terms of biological role, catalase; part of the gene cluster that mediates the biosynthesis of fungal ergot alkaloid. DmaW catalyzes the first step of ergot alkaloid biosynthesis by condensing dimethylallyl diphosphate (DMAP) and tryptophan to form 4-dimethylallyl-L-tryptophan. The second step is catalyzed by the methyltransferase easF that methylates 4-dimethylallyl-L-tryptophan in the presence of S-adenosyl-L-methionine, resulting in the formation of 4-dimethylallyl-L-abrine. The catalase easC and the FAD-dependent oxidoreductase easE then transform 4-dimethylallyl-L-abrine to chanoclavine-I which is further oxidized by easD in the presence of NAD(+), resulting in the formation of chanoclavine-I aldehyde. Chanoclavine-I aldehyde is the precursor of ergoamides and ergopeptines in Clavicipitaceae, and clavine-type alcaloids such as fumiclavine in Trichocomaceae. However, the metabolites downstream of chanoclavine-I aldehyde in Arthrodermataceae have not been identified yet. In Arthroderma benhamiae (strain ATCC MYA-4681 / CBS 112371) (Trichophyton mentagrophytes), this protein is Catalase easC.